A 266-amino-acid polypeptide reads, in one-letter code: Tryptophan synthase alpha chain (266 aa).

Active-site proton acceptor residues include Glu-47 and Asp-58.

Belongs to the TrpA family. Tetramer of two alpha and two beta chains.

The enzyme catalyses (1S,2R)-1-C-(indol-3-yl)glycerol 3-phosphate + L-serine = D-glyceraldehyde 3-phosphate + L-tryptophan + H2O. Its pathway is amino-acid biosynthesis; L-tryptophan biosynthesis; L-tryptophan from chorismate: step 5/5. Functionally, the alpha subunit is responsible for the aldol cleavage of indoleglycerol phosphate to indole and glyceraldehyde 3-phosphate. This chain is Tryptophan synthase alpha chain, found in Leptospira biflexa serovar Patoc (strain Patoc 1 / Ames).